Reading from the N-terminus, the 980-residue chain is Vacuolar protein sorting-associated protein 11 homolog (980 aa).

Residues 407–554 (YKETIGMLEP…GRDLLIHARD (148 aa)) form a CHCR repeat. An RING-type; atypical zinc finger spans residues 803-843 (CSACDTPLQLPTVHFLCKHAYHVHCFESYNMDGSDKCPACQ). The span at 886–898 (TKKTKKSEAKKDP) shows a compositional bias: basic and acidic residues. The interval 886-980 (TKKTKKSEAK…APAPSTNPFD (95 aa)) is disordered. Composition is skewed to polar residues over residues 917-937 (TTIS…SRQR) and 947-960 (TNPF…TRLS).

It belongs to the VPS11 family. Probable core component of at least two putative endosomal tethering complexes, the homotypic fusion and vacuole protein sorting (HOPS) complex and the class C core vacuole/endosome tethering (CORVET) complex. Their common core is composed of the class C Vps proteins vps-11, vps-16 and vps-18, which in HOPS further associates with vps-33.1, vps-39 and vps-41 and in CORVET with vps-8 and vps-33.2.

The protein resides in the late endosome membrane. It is found in the lysosome membrane. In terms of biological role, plays a role in vesicle-mediated protein trafficking to lysosomal compartments including the endocytic membrane transport pathways. Believed to act as a core component of the putative HOPS and CORVET endosomal tethering complexes which are proposed to be involved in the rab-5-to-rab-7 endosome conversion probably implicating sand-1, and via binding SNAREs and SNARE complexes to mediate tethering and docking events during SNARE-mediated membrane fusion. The HOPS complex is proposed to be recruited to Rab7 on the late endosomal membrane and to regulate late endocytic, phagocytic and autophagic traffic towards lysosomes. Within the HOPS complex, contributes to the normal development of gut granules in embryonic and adult intestinal cells. The CORVET complex is proposed to function as a Rab5 effector to mediate early endosome fusion probably in specific endosome subpopulations. Required for fusion of endosomes and autophagosomes with lysosomes. Involved in cargo transport from early to late endosomes and required for the transition from early to late endosomes. Possibly has a role in clearance of apoptotic cells during programmed cell death. In Caenorhabditis elegans, this protein is Vacuolar protein sorting-associated protein 11 homolog.